We begin with the raw amino-acid sequence, 634 residues long: Frizzled and smoothened-like protein D (634 aa).

The signal sequence occupies residues 1–21; the sequence is MINKFKFYLIFLKLILILVNC. Residues 22–257 are Extracellular-facing; sequence QNSLNDYGFG…QMDSVINMSK (236 aa). An FZ domain is found at 34–178; the sequence is DESSICTSYI…LTKYGYTANG (145 aa). Residues Asn-126, Asn-168, Asn-215, Asn-243, and Asn-254 are each glycosylated (N-linked (GlcNAc...) asparagine). Residues 258–278 traverse the membrane as a helical segment; it reads AMSSISFVLSLFNVITFGLLI. Topologically, residues 279–287 are cytoplasmic; sequence KKKSKYNVC. Residues 288–308 form a helical membrane-spanning segment; that stretch reads IALMAIGSSFIYLSDIINYGV. The Extracellular segment spans residues 309 to 335; sequence GIEKQLCPEPGRVATQRVDSLCGFTGS. The chain crosses the membrane as a helical span at residues 336–356; the sequence is IFHIGITLCVLWSMTMGIVLY. The Cytoplasmic portion of the chain corresponds to 357 to 368; the sequence is SKIKQFKLPNFR. The helical transmembrane segment at 369-389 threads the bilayer; that stretch reads YFLIGNLSFTVVTLIILASAK. Residues 390–410 are Extracellular-facing; it reads KFQGGNGFLECWMRDRWYVVA. The chain crosses the membrane as a helical span at residues 411–431; the sequence is IFWIPCGIALLLGVLSICGVI. Over 432-454 the chain is Cytoplasmic; sequence FEIYKISKNVSLKDSKVVIRELK. A helical membrane pass occupies residues 455–475; the sequence is PFVLVVTVSASLIYLFVFYFD. At 476 to 513 the chain is on the extracellular side; the sequence is SESKYDFYKKGVEDYILCLLTSENPLDECYTVGPNFNS. Residues 514 to 534 traverse the membrane as a helical segment; that stretch reads YFMFYFLIRFFGILFFGIFGT. Residues 535–634 lie on the Cytoplasmic side of the membrane; the sequence is SEIARNAWTE…MEIELDSIDI (100 aa). A disordered region spans residues 560-624; the sequence is VSSSTRGGGG…NNNNNDNNNK (65 aa). Low complexity-rich tracts occupy residues 572–592 and 609–622; these read SGIK…NNST and DNTI…NDNN.

The protein belongs to the G-protein coupled receptor Fz/Smo family.

It localises to the membrane. This chain is Frizzled and smoothened-like protein D (fslD), found in Dictyostelium discoideum (Social amoeba).